The primary structure comprises 92 residues: uncharacterized protein (92 aa).

This is an uncharacterized protein from Enterobacteria phage T4 (Bacteriophage T4).